The primary structure comprises 791 residues: Protein CLASP-2 (791 aa).

Composition is skewed to low complexity over residues 259-271 (ASDA…SVNS), 323-334 (RTPNTRPMTTRT), and 372-381 (SQPGSRNGSP). Disordered stretches follow at residues 259 to 283 (ASDA…SKLS), 315 to 391 (TRMT…TGTL), and 422 to 454 (AMNT…PQKS). A compositionally biased stretch (polar residues) spans 422–434 (AMNTAKESLGQPS).

It belongs to the CLASP family. Interacts with hcp-1 and hcp-2.

It is found in the cytoplasm. The protein resides in the cytoskeleton. It localises to the microtubule organizing center. Its subcellular location is the centrosome. The protein localises to the chromosome. It is found in the centromere. The protein resides in the kinetochore. It localises to the spindle. Its function is as follows. Probable microtubule plus-end tracking protein that promotes the stabilization of dynamic microtubules. Required for the formation of mitotic and meiotic spindles. Specifically promotes the polymerization of kinetochore-bound microtubules. Also required for cytoplasmic streaming. The protein is Protein CLASP-2 (cls-2) of Caenorhabditis briggsae.